The chain runs to 229 residues: Heptaprenylglyceryl phosphate synthase (229 aa).

Mg(2+) is bound by residues aspartate 13 and threonine 39.

This sequence belongs to the GGGP/HepGP synthase family. Homodimer. Requires Mg(2+) as cofactor.

It catalyses the reaction sn-glycerol 1-phosphate + all-trans-heptaprenyl diphosphate = 3-heptaprenyl-sn-glycero-1-phosphate + diphosphate. The protein operates within membrane lipid metabolism; glycerophospholipid metabolism. Functionally, prenyltransferase that catalyzes in vivo the transfer of the heptaprenyl moiety of heptaprenyl pyrophosphate (HepPP; 35 carbon atoms) to the C3 hydroxyl of sn-glycerol-1-phosphate (G1P), producing heptaprenylglyceryl phosphate (HepGP). This reaction is an ether-bond-formation step in the biosynthesis of archaea-type G1P-based membrane lipids found in Bacillales. The chain is Heptaprenylglyceryl phosphate synthase from Lysinibacillus sphaericus (strain C3-41).